We begin with the raw amino-acid sequence, 396 residues long: Probable sugar efflux transporter (396 aa).

The next 12 helical transmembrane spans lie at 15-35, 50-70, 81-101, 103-123, 136-156, 170-190, 209-229, 246-266, 275-295, 299-319, 333-353, and 364-384; these read VVTLAVAAFIFNTTEFVPVGL, VGIMLTIYAWVVALMSLPFML, LICLFVVFIASHVLSFLSWSF, VLVISRIGVAFAHAIFWSITA, AQALSLIATGTALAMVLGLPL, FFAIGIGALITLLCLIKLLPL, PALMSIYLLTVVVVTAHYTAY, FATALLLLLGGAGIIGSVIFG, ALVSTAIALLLVCLALLLPAA, IHLGVLSIFWGIAMMIIGLGM, VAMALFSGIFNIGIGAGALVG, and MIGYVGAVPAFAALIWSIIIF.

Belongs to the major facilitator superfamily. SotB (TC 2.A.1.2) family.

The protein resides in the cell inner membrane. Involved in the efflux of sugars. The physiological role may be the reduction of the intracellular concentration of toxic sugars or sugar metabolites. This is Probable sugar efflux transporter from Escherichia coli O139:H28 (strain E24377A / ETEC).